A 267-amino-acid polypeptide reads, in one-letter code: Heme-containing CO-sensing transcriptional regulator RcoM 2 (267 aa).

Residues 15-86 (RAETFQHKLE…KSRDKLRFLL (72 aa)) enclose the PAS domain. Heme is bound by residues His-74 and Met-104. An HTH LytTR-type domain is found at 161–266 (IPVYRKSRVI…TAQLKELLGV (106 aa)).

Requires heme as cofactor.

Its subcellular location is the cytoplasm. One-component, b-type heme-containing aerobic sensor and transcriptional regulator that responds to CO by activating the expression of the oxidation operon cox. The polypeptide is Heme-containing CO-sensing transcriptional regulator RcoM 2 (rcoM2) (Paraburkholderia xenovorans (strain LB400)).